The primary structure comprises 256 residues: Enolase-phosphatase E1 (256 aa).

The Mg(2+) site is built by D14 and E16. Residues 142-143 (SS) and K176 each bind substrate. D201 contacts Mg(2+).

This sequence belongs to the HAD-like hydrolase superfamily. MasA/MtnC family. Monomer. It depends on Mg(2+) as a cofactor.

It localises to the cytoplasm. The protein localises to the nucleus. The catalysed reaction is 5-methylsulfanyl-2,3-dioxopentyl phosphate + H2O = 1,2-dihydroxy-5-(methylsulfanyl)pent-1-en-3-one + phosphate. The protein operates within amino-acid biosynthesis; L-methionine biosynthesis via salvage pathway; L-methionine from S-methyl-5-thio-alpha-D-ribose 1-phosphate: step 3/6. It participates in amino-acid biosynthesis; L-methionine biosynthesis via salvage pathway; L-methionine from S-methyl-5-thio-alpha-D-ribose 1-phosphate: step 4/6. Bifunctional enzyme that catalyzes the enolization of 2,3-diketo-5-methylthiopentyl-1-phosphate (DK-MTP-1-P) into the intermediate 2-hydroxy-3-keto-5-methylthiopentenyl-1-phosphate (HK-MTPenyl-1-P), which is then dephosphorylated to form the acireductone 1,2-dihydroxy-3-keto-5-methylthiopentene (DHK-MTPene). This Drosophila erecta (Fruit fly) protein is Enolase-phosphatase E1.